Consider the following 406-residue polypeptide: Betaine--homocysteine S-methyltransferase 1 (406 aa).

The region spanning 11-314 is the Hcy-binding domain; it reads KGILERLNAG…YHIRAIAEEL (304 aa). K40, K93, and K98 each carry N6-succinyllysine. Zn(2+) is bound at residue C217. An N6-succinyllysine mark is found at K232 and K241. The Zn(2+) site is built by C299 and C300. Position 330 is a phosphoserine (S330). K340 and K377 each carry N6-succinyllysine.

In terms of assembly, homotetramer. The cofactor is Zn(2+).

The protein resides in the cytoplasm. Its subcellular location is the cytosol. It localises to the nucleus. The enzyme catalyses L-homocysteine + glycine betaine = N,N-dimethylglycine + L-methionine. Its pathway is amine and polyamine degradation; betaine degradation; sarcosine from betaine: step 1/2. The protein operates within amino-acid biosynthesis; L-methionine biosynthesis via de novo pathway; L-methionine from L-homocysteine (BhmT route): step 1/1. Its function is as follows. Involved in the regulation of homocysteine metabolism. Converts betaine and homocysteine to dimethylglycine and methionine, respectively. This reaction is also required for the irreversible oxidation of choline. The protein is Betaine--homocysteine S-methyltransferase 1 (BHMT) of Pongo abelii (Sumatran orangutan).